The sequence spans 274 residues: Glutamate racemase (274 aa).

Residues 9–10 (DS) and 41–42 (YG) contribute to the substrate site. Residue cysteine 73 is the Proton donor/acceptor of the active site. 74 to 75 (NT) serves as a coordination point for substrate. Cysteine 183 acts as the Proton donor/acceptor in catalysis. 184–185 (TH) is a binding site for substrate.

The protein belongs to the aspartate/glutamate racemases family.

It catalyses the reaction L-glutamate = D-glutamate. It participates in cell wall biogenesis; peptidoglycan biosynthesis. Its function is as follows. Provides the (R)-glutamate required for cell wall biosynthesis. The sequence is that of Glutamate racemase from Shewanella baltica (strain OS155 / ATCC BAA-1091).